Reading from the N-terminus, the 297-residue chain is Homoserine kinase (297 aa).

ATP is bound at residue 84 to 94; it reads PPARGLGSSAT.

Belongs to the GHMP kinase family. Homoserine kinase subfamily.

It localises to the cytoplasm. The enzyme catalyses L-homoserine + ATP = O-phospho-L-homoserine + ADP + H(+). Its pathway is amino-acid biosynthesis; L-threonine biosynthesis; L-threonine from L-aspartate: step 4/5. Functionally, catalyzes the ATP-dependent phosphorylation of L-homoserine to L-homoserine phosphate. The protein is Homoserine kinase (thrB) of Aquifex aeolicus (strain VF5).